Consider the following 230-residue polypeptide: MIDKPINRCPMEQNTEKFSIPNSQFSILTSYFPDLTDRQKEQYAALYDLYTDWNAKINVISRKDIENLYPHHVLHSLGITDMLRFKPGSSVMDLGTGGGFPGIPLAILFPETHFHLVDSIGKKIKVGQAVAEAIGLENVSFRHCRGEEEKQLFDFVVSRAVMPLADLVKIVRKNIKKEQINALPNGLICLKGGELAHEILPFRNQAISMDLKDHFKEEFFETKKVVYVPL.

Residues Gly-95, Phe-100, 146–147, and Arg-159 each bind S-adenosyl-L-methionine; that span reads GE.

Belongs to the methyltransferase superfamily. RNA methyltransferase RsmG family.

Its subcellular location is the cytoplasm. Its function is as follows. Specifically methylates the N7 position of a guanine in 16S rRNA. The sequence is that of Ribosomal RNA small subunit methyltransferase G from Parabacteroides distasonis (strain ATCC 8503 / DSM 20701 / CIP 104284 / JCM 5825 / NCTC 11152).